The following is an 838-amino-acid chain: Ras-interacting protein RIP3 (838 aa).

Disordered regions lie at residues 66-97 (VSTSNNNATSGNSTPPNNAISPNQQQQQQQQA), 157-290 (KPTT…TSPK), and 305-336 (NSKTLQKSDKTSEKENKQQQPDSSKTQQQQQA). Composition is skewed to low complexity over residues 67-97 (STSNNNATSGNSTPPNNAISPNQQQQQQQQA), 157-241 (KPTT…QQKP), and 248-284 (PQNISQPQNISQQQNTNNVQQNNQQQQQQQQQQQQQQ). Basic and acidic residues predominate over residues 310-321 (QKSDKTSEKENK). Residues 441 to 515 (QLKVRVIEKA…KDEVLVLCPN (75 aa)) form the CRIM domain. 2 disordered regions span residues 522–581 (KSSS…QQTQ) and 594–646 (QQQQ…GPDA). Composition is skewed to low complexity over residues 537-556 (NNNNSVNSNSSNNSNSSNNN), 563-581 (QPQQSQQQQQQTQQTQQTQ), and 594-620 (QQQQQQQQQHPQQIQQQLSSNQLQPDQ). Residues 621–631 (VGGGGGGGGGN) show a composition bias toward gly residues. The RBD domain occupies 648-717 (LVVKITLPDS…GGADLILVSR (70 aa)).

This sequence belongs to the SIN1 family. Interacts with activated RasG. Part of a complex, TORC2, consisting of tor, lst8, piaA and ripA. Additional proteins, such as 14-3-3 and heat-shock proteins, may also belong to the TORC2 complex.

Component of a Ras-regulated pathway involved in integrating chemotaxis and signal relay pathways that are essential for aggregation. This chain is Ras-interacting protein RIP3 (ripA), found in Dictyostelium discoideum (Social amoeba).